Consider the following 235-residue polypeptide: Pro-opiomelanocortin (235 aa).

A signal peptide spans 1-26 (MPRFCNSRSGALLLALLLQTSIDVWS). Phe87 bears the Phenylalanine amide mark. The segment at 88 to 128 (GPRNSSSAGGSAQRRAEEETAGGDGRPEPSPREGKRSYSME) is disordered. The segment covering 112–128 (GRPEPSPREGKRSYSME) has biased composition (basic and acidic residues). Ser124 is modified (N-acetylserine; in Corticotropin). Val136 carries the post-translational modification Valine amide. N-linked (GlcNAc...) asparagine glycosylation is present at Asn152. Residue Ser154 is modified to Phosphoserine. A disordered region spans residues 169–209 (EQPDGLEQVLEPDTEKADGPYRVEHFRWGNPPKDKRYGGFM). Residues 181-205 (DTEKADGPYRVEHFRWGNPPKDKRY) show a composition bias toward basic and acidic residues.

Belongs to the POMC family. Specific enzymatic cleavages at paired basic residues yield the different active peptides. ACTH and MSH are produced by the pituitary gland.

The protein resides in the secreted. Its function is as follows. Stimulates the adrenal glands to release cortisol. In terms of biological role, anorexigenic peptide. Increases the pigmentation of skin by increasing melanin production in melanocytes. Increases the pigmentation of skin by increasing melanin production in melanocytes. Functionally, endogenous orexigenic opiate. Its function is as follows. Endogenous opiate. This is Pro-opiomelanocortin (Pomc) from Rattus norvegicus (Rat).